A 217-amino-acid chain; its full sequence is Large ribosomal subunit protein uL1 (217 aa).

At S2 the chain carries N-acetylserine. Y11 bears the Phosphotyrosine mark. Residues K91 and K106 each carry the N6-acetyllysine modification. N6-acetyllysine; alternate is present on K118. K118 is covalently cross-linked (Glycyl lysine isopeptide (Lys-Gly) (interchain with G-Cter in SUMO1); alternate). A Glycyl lysine isopeptide (Lys-Gly) (interchain with G-Cter in SUMO2); alternate cross-link involves residue K118.

Belongs to the universal ribosomal protein uL1 family. In terms of assembly, component of the large ribosomal subunit.

The protein resides in the cytoplasm. Its function is as follows. Component of the large ribosomal subunit. The ribosome is a large ribonucleoprotein complex responsible for the synthesis of proteins in the cell. The polypeptide is Large ribosomal subunit protein uL1 (RPL10A) (Macaca fascicularis (Crab-eating macaque)).